The sequence spans 302 residues: N-acetylmuramic acid 6-phosphate etherase (302 aa).

Positions 58–221 (IGKAFLNGGR…STGAMVKTGK (164 aa)) constitute an SIS domain. Glutamate 86 (proton donor) is an active-site residue. Glutamate 117 is a catalytic residue.

This sequence belongs to the GCKR-like family. MurNAc-6-P etherase subfamily. As to quaternary structure, homodimer.

It catalyses the reaction N-acetyl-D-muramate 6-phosphate + H2O = N-acetyl-D-glucosamine 6-phosphate + (R)-lactate. It participates in amino-sugar metabolism; N-acetylmuramate degradation. Its function is as follows. Specifically catalyzes the cleavage of the D-lactyl ether substituent of MurNAc 6-phosphate, producing GlcNAc 6-phosphate and D-lactate. The sequence is that of N-acetylmuramic acid 6-phosphate etherase from Clostridium botulinum (strain Loch Maree / Type A3).